The primary structure comprises 109 residues: Ribonuclease P protein component (109 aa).

This sequence belongs to the RnpA family. Consists of a catalytic RNA component (M1 or rnpB) and a protein subunit.

It catalyses the reaction Endonucleolytic cleavage of RNA, removing 5'-extranucleotides from tRNA precursor.. RNaseP catalyzes the removal of the 5'-leader sequence from pre-tRNA to produce the mature 5'-terminus. It can also cleave other RNA substrates such as 4.5S RNA. The protein component plays an auxiliary but essential role in vivo by binding to the 5'-leader sequence and broadening the substrate specificity of the ribozyme. The polypeptide is Ribonuclease P protein component (Nitratiruptor sp. (strain SB155-2)).